Reading from the N-terminus, the 450-residue chain is Serine incorporator 2 (450 aa).

11 consecutive transmembrane segments (helical) span residues 5 to 27 (LGAC…ILCG), 40 to 57 (LLFT…IIML), 96 to 118 (AVYR…MICV), 131 to 150 (GFWF…AFYI), 160 to 182 (FYFG…VDFA), 203 to 225 (AGLF…LMFV), 238 to 257 (VFIS…AVLP), 264 to 286 (PNSG…WSAL), 315 to 337 (VWWD…FISL), 380 to 402 (TYSY…MTLT), and 417 to 439 (WTSV…WTLV).

It belongs to the TDE1 family.

The protein localises to the cell membrane. The catalysed reaction is a 1,2-diacyl-sn-glycero-3-phospho-L-serine(in) = a 1,2-diacyl-sn-glycero-3-phospho-L-serine(out). It carries out the reaction a 1,2-diacyl-sn-glycero-3-phosphocholine(in) = a 1,2-diacyl-sn-glycero-3-phosphocholine(out). It catalyses the reaction a 1,2-diacyl-sn-glycero-3-phosphoethanolamine(in) = a 1,2-diacyl-sn-glycero-3-phosphoethanolamine(out). Its function is as follows. Non-ATP-dependent, non-specific lipid transporter for phosphatidylserine, phosphatidylcholine, and phosphatidylethanolamine. Functions as a scramblase that flips lipids in both directions across the membrane. In contrast to SERINC3 and SERINC5, has no effect on gammaretrovirus particles infectivity. The polypeptide is Serine incorporator 2 (Serinc2) (Mus musculus (Mouse)).